The primary structure comprises 103 residues: Small ribosomal subunit protein uS10 (103 aa).

Belongs to the universal ribosomal protein uS10 family. As to quaternary structure, part of the 30S ribosomal subunit.

Involved in the binding of tRNA to the ribosomes. The sequence is that of Small ribosomal subunit protein uS10 from Thioalkalivibrio sulfidiphilus (strain HL-EbGR7).